The following is an 817-amino-acid chain: Probable beta-glucosidase G (817 aa).

The N-terminal stretch at 1 to 20 is a signal peptide; it reads MANIAHLIVSGLLAATVAHG. Residues N40, N58, N229, and N276 are each glycosylated (N-linked (GlcNAc...) asparagine). D304 is an active-site residue. N-linked (GlcNAc...) asparagine glycans are attached at residues N343, N350, N402, N507, N563, N584, N623, N662, N679, and N715.

It belongs to the glycosyl hydrolase 3 family.

It is found in the secreted. The catalysed reaction is Hydrolysis of terminal, non-reducing beta-D-glucosyl residues with release of beta-D-glucose.. It participates in glycan metabolism; cellulose degradation. Its function is as follows. Beta-glucosidases are one of a number of cellulolytic enzymes involved in the degradation of cellulosic biomass. Catalyzes the last step releasing glucose from the inhibitory cellobiose. The protein is Probable beta-glucosidase G (bglG) of Aspergillus terreus (strain NIH 2624 / FGSC A1156).